The following is a 643-amino-acid chain: Capsid scaffolding protein (643 aa).

Over residues 1 to 15 (MSSPSPSSSSSDHPS) the composition is skewed to low complexity. The segment at 1 to 31 (MSSPSPSSSSSDHPSSPAPVPAPPGPVPEAA) is disordered. A compositionally biased stretch (pro residues) spans 16-27 (SPAPVPAPPGPV). Active-site charge relay system residues include His-82, Ser-151, and His-173. The disordered stretch occupies residues 283–306 (SARGGEDPPTAAIATTPHPATDAT). Over residues 290-306 (PPTAAIATTPHPATDAT) the composition is skewed to low complexity. The segment at 324 to 343 (EDLISVPRSTFMTMLQTNLD) is interaction with pAP. A Nuclear localization signal motif is present at residues 439-445 (RPGKRKR). Disordered stretches follow at residues 485-519 (QQFPQPLPQPQLQPQAQPQPQPAPQLYPAPPQAFY) and 544-625 (CAPG…STKP). Positions 489–515 (QPLPQPQLQPQAQPQPQPAPQLYPAPP) are enriched in pro residues. Positions 607–616 (PQQQQQPQQQ) are enriched in low complexity. The interaction with major capsid protein stretch occupies residues 623-643 (TKPSQISQLQKIFCEELLNKT).

Belongs to the herpesviridae capsid scaffolding protein family. In terms of assembly, homomultimer. Interacts with major capsid protein. Exists in a monomer-dimer equilibrium with the dimer being the active species. In terms of processing, capsid scaffolding protein is cleaved by assemblin after formation of the spherical procapsid. As a result, the capsid obtains its mature, icosahedral shape. Cleavages occur at two or more sites: release (R-site) and maturation (M-site).

Its subcellular location is the host cytoplasm. The protein resides in the host nucleus. It catalyses the reaction Cleaves -Ala-|-Ser- and -Ala-|-Ala- bonds in the scaffold protein.. Its function is as follows. Acts as a scaffold protein by binding major capsid protein in the cytoplasm, inducing the nuclear localization of both proteins. Multimerizes in the nucleus such as major capsid protein forms the icosahedral T=16 capsid. Autocatalytic cleavage releases the assembly protein, and subsequently abolishes interaction with major capsid protein. Cleavages products are evicted from the capsid before or during DNA packaging. Functionally, protease that plays an essential role in virion assembly within the nucleus. Catalyzes the cleavage of the assembly protein after formation of the spherical procapsid. By that cleavage, the capsid matures and gains its icosahedral shape. The cleavage sites seem to include -Ala-Ser-, -Ala-Ala-, as well as Ala-Thr bonds. Assemblin and cleavages products are evicted from the capsid before or during DNA packaging. In terms of biological role, plays a major role in capsid assembly. Acts as a scaffold protein by binding major capsid protein. Multimerizes in the nucleus such as major capsid protein forms the icosahedral T=16 capsid. Cleaved by assemblin after capsid completion. The cleavages products are evicted from the capsid before or during DNA packaging. In Equine herpesvirus 2 (strain 86/87) (EHV-2), this protein is Capsid scaffolding protein.